The primary structure comprises 367 residues: Homoserine O-acetyltransferase (367 aa).

The 307-residue stretch at 44–350 folds into the AB hydrolase-1 domain; sequence NAIMVTHAWT…AYGHDAFLLE (307 aa). The Nucleophile role is filled by S150. R217 is a substrate binding site. Active-site residues include D311 and H344. D345 contacts substrate.

Belongs to the AB hydrolase superfamily. MetX family. As to quaternary structure, homodimer.

The protein localises to the cytoplasm. It carries out the reaction L-homoserine + acetyl-CoA = O-acetyl-L-homoserine + CoA. It functions in the pathway amino-acid biosynthesis; L-methionine biosynthesis via de novo pathway; O-acetyl-L-homoserine from L-homoserine: step 1/1. Functionally, transfers an acetyl group from acetyl-CoA to L-homoserine, forming acetyl-L-homoserine. In Geotalea daltonii (strain DSM 22248 / JCM 15807 / FRC-32) (Geobacter daltonii), this protein is Homoserine O-acetyltransferase.